The following is a 158-amino-acid chain: uncharacterized protein (158 aa).

This is an uncharacterized protein from Mycoplasma pneumoniae (strain ATCC 29342 / M129 / Subtype 1) (Mycoplasmoides pneumoniae).